Consider the following 510-residue polypeptide: Ribonuclease Y (510 aa).

The chain crosses the membrane as a helical span at residues 2–22; it reads IYIIFSSIFAGFILGFLVRVF. The 61-residue stretch at 198–258 folds into the KH domain; that stretch reads TVASVELPND…IRKELAKRTL (61 aa). One can recognise an HD domain in the interval 324–419; the sequence is VLSHSKETAI…VQIADAISAS (96 aa).

Belongs to the RNase Y family.

It localises to the cell membrane. In terms of biological role, endoribonuclease that initiates mRNA decay. The chain is Ribonuclease Y from Borreliella burgdorferi (strain ATCC 35210 / DSM 4680 / CIP 102532 / B31) (Borrelia burgdorferi).